We begin with the raw amino-acid sequence, 255 residues long: 14-3-3-like protein GF14 psi (255 aa).

Residue Ser-66 is modified to Phosphoserine. Thr-162 carries the phosphothreonine modification. At Ser-189 the chain carries Phosphoserine. Residues Thr-210 and Thr-238 each carry the phosphothreonine modification.

Belongs to the 14-3-3 family. As to quaternary structure, component of a DNA binding complex that binds to the G box. Interacts with IDH3, AGT3, GLN1-1, GLN1-2, GLN1-4, SAM1, SAM2, MDH1, METK3 and MDH2. Binds to 1-aminocyclopropane-1-carboxylate synthases (ACS) such as ACS2, ACS5, ACS6, ACS8, and ACS11. Interacts with FD. Interacts with DREB1A and DREB1B in the nucleus. Interacts with CINV1.

It localises to the cytoplasm. Its subcellular location is the nucleus. Functionally, is associated with a DNA binding complex that binds to the G box, a well-characterized cis-acting DNA regulatory element found in plant genes. Involved in the regulation of nutrient metabolism. Reciprocal negative transcription regulation of miR396. Negative regulator of constitutive freezing tolerance and cold acclimation by controlling cold-induced gene expression partially through an ethylene (ET)-dependent pathway; prevents ethylene (ET) biosynthesis, probably by binding 1-aminocyclopropane-1-carboxylate synthases (ACS) to reduce their stability, thus contributing to establish adequate ET levels under both standard and low-temperature conditions. This is 14-3-3-like protein GF14 psi from Arabidopsis thaliana (Mouse-ear cress).